The sequence spans 331 residues: Methionyl-tRNA formyltransferase (331 aa).

Position 111–114 (111–114 (SLLP)) interacts with (6S)-5,6,7,8-tetrahydrofolate.

This sequence belongs to the Fmt family.

It catalyses the reaction L-methionyl-tRNA(fMet) + (6R)-10-formyltetrahydrofolate = N-formyl-L-methionyl-tRNA(fMet) + (6S)-5,6,7,8-tetrahydrofolate + H(+). Attaches a formyl group to the free amino group of methionyl-tRNA(fMet). The formyl group appears to play a dual role in the initiator identity of N-formylmethionyl-tRNA by promoting its recognition by IF2 and preventing the misappropriation of this tRNA by the elongation apparatus. The polypeptide is Methionyl-tRNA formyltransferase (Thermosynechococcus vestitus (strain NIES-2133 / IAM M-273 / BP-1)).